A 318-amino-acid polypeptide reads, in one-letter code: Cytochrome f (318 aa).

An N-terminal signal peptide occupies residues 1–32 (MQNKNNYNWLKEWVIRSFLLLTLLTWPSVSNA). Positions 33, 53, 56, and 57 each coordinate heme. A helical membrane pass occupies residues 284 to 304 (IQGLLLFFASVVLAQIFLVLK).

This sequence belongs to the cytochrome f family. In terms of assembly, the 4 large subunits of the cytochrome b6-f complex are cytochrome b6, subunit IV (17 kDa polypeptide, petD), cytochrome f and the Rieske protein, while the 4 small subunits are PetG, PetL, PetM and PetN. The complex functions as a dimer. Requires heme as cofactor.

The protein localises to the plastid. It localises to the chloroplast thylakoid membrane. Its function is as follows. Component of the cytochrome b6-f complex, which mediates electron transfer between photosystem II (PSII) and photosystem I (PSI), cyclic electron flow around PSI, and state transitions. This chain is Cytochrome f, found in Angiopteris evecta (Mule's foot fern).